Consider the following 538-residue polypeptide: Exo-alpha-bergamotene synthase (538 aa).

Positions 291, 295, 435, 439, and 443 each coordinate Mg(2+). The DDXXD motif motif lies at 291–295 (DDIYD).

Belongs to the terpene synthase family. Mg(2+) serves as cofactor. The cofactor is Mn(2+).

It carries out the reaction (2E,6E)-farnesyl diphosphate = (1S,5S,6R)-alpha-bergamotene + diphosphate. Its function is as follows. Catalyzes a mixture of sesquiterpenoids from (2E,6E)-farnesyl diphosphate. Catalyzes the formation of exo-alpha-bergamotene, as well as (E)-nerolidol, (Z)-alpha-bisabolene, (E)-beta-farnesene and beta-sesquiphellandrene. Also has activity towards geranyl diphosphate, but to a much lesser extent. This chain is Exo-alpha-bergamotene synthase, found in Lavandula angustifolia (Lavender).